A 630-amino-acid polypeptide reads, in one-letter code: MSTFKNALPASNDILTRDPLPASHKTYISGEIHPEIKVPMRAITLTNGETVTVYDTSGPYTDPNIEIDVAQGIPTVRKDWIANRNDVEAYEGRIIDPKDNGYKNRTQMETAIAGASSLMRQPLRAKAGQNVTQLHYARQGIITPEMEFIAIRENQRRDMTRRYLNDPEREARLKGENFGANLLEDITPEFVRKEVAEGRAVIPANINHPESEPMIIGRNFLVKVNANIGNSATTSSIGEEVEKMVWATRWGADTVMDLSTGQNIHTTRDWILRNAPVPIGTVPIYQALEKVNGVAEDLTWEIFRDTLIEQAEQGVDYFTIHAGVLLRYVPMTAKRVTGIVSRGGSIMAKWCIAHHKENFLYTHFEDICEILKQYDVSFSLGDGLRPGSVADANDEAQISELKTLGELTQIAWKHDVQVIIEGPGHVPMHMIKENMDKQLEYCHEAPFYTLGPLTTDIAPGYDHITSGIGAAMIGWFGTAMLCYVTPKEHLGLPNRDDVKEGLITYKLAAHAADIAKGHPGARSRDDALSQARFEFRWEDQFNLGLDPEKARAFHDETLPRDSAKVAHFCSMCGPKFCSMKISQEVRDYADKQGLSTEDAVNKGMEEMSQTFKNQGSEVYVNVEDITKTGS.

Substrate contacts are provided by residues asparagine 227, methionine 256, tyrosine 285, histidine 321, 341–343, 382–385, and glutamate 421; these read SRG and DGLR. Zn(2+) is bound at residue histidine 425. Tyrosine 448 serves as a coordination point for substrate. Residue histidine 489 coordinates Zn(2+). Positions 569, 572, and 577 each coordinate [4Fe-4S] cluster.

Belongs to the ThiC family. As to quaternary structure, homodimer. It depends on [4Fe-4S] cluster as a cofactor.

It carries out the reaction 5-amino-1-(5-phospho-beta-D-ribosyl)imidazole + S-adenosyl-L-methionine = 4-amino-2-methyl-5-(phosphooxymethyl)pyrimidine + CO + 5'-deoxyadenosine + formate + L-methionine + 3 H(+). Its pathway is cofactor biosynthesis; thiamine diphosphate biosynthesis. Its function is as follows. Catalyzes the synthesis of the hydroxymethylpyrimidine phosphate (HMP-P) moiety of thiamine from aminoimidazole ribotide (AIR) in a radical S-adenosyl-L-methionine (SAM)-dependent reaction. The protein is Phosphomethylpyrimidine synthase of Hydrogenovibrio crunogenus (strain DSM 25203 / XCL-2) (Thiomicrospira crunogena).